The primary structure comprises 555 residues: Arginine--tRNA ligase (555 aa).

The 'HIGH' region motif lies at 117–127 (ANPNGPLHVGH).

Belongs to the class-I aminoacyl-tRNA synthetase family.

It is found in the cytoplasm. The catalysed reaction is tRNA(Arg) + L-arginine + ATP = L-arginyl-tRNA(Arg) + AMP + diphosphate. The sequence is that of Arginine--tRNA ligase from Methanospirillum hungatei JF-1 (strain ATCC 27890 / DSM 864 / NBRC 100397 / JF-1).